The following is a 116-amino-acid chain: Large ribosomal subunit protein bL17 (116 aa).

This sequence belongs to the bacterial ribosomal protein bL17 family. As to quaternary structure, part of the 50S ribosomal subunit. Contacts protein L32.

This is Large ribosomal subunit protein bL17 from Synechococcus sp. (strain JA-2-3B'a(2-13)) (Cyanobacteria bacterium Yellowstone B-Prime).